The sequence spans 449 residues: Ribosomal protein uS12 methylthiotransferase RimO (449 aa).

The MTTase N-terminal domain maps to 15–125; sequence PRISFVSLGC…VLAAVHEAVP (111 aa). Positions 24, 60, 89, 156, 160, and 163 each coordinate [4Fe-4S] cluster. The 238-residue stretch at 142 to 379 folds into the Radical SAM core domain; it reads LTPRHYAYLK…MRTQQKVSAR (238 aa). The region spanning 382-448 is the TRAM domain; the sequence is KRKVGTRQSV…PYDLSGTAVG (67 aa).

The protein belongs to the methylthiotransferase family. RimO subfamily. [4Fe-4S] cluster is required as a cofactor.

It localises to the cytoplasm. It catalyses the reaction L-aspartate(89)-[ribosomal protein uS12]-hydrogen + (sulfur carrier)-SH + AH2 + 2 S-adenosyl-L-methionine = 3-methylsulfanyl-L-aspartate(89)-[ribosomal protein uS12]-hydrogen + (sulfur carrier)-H + 5'-deoxyadenosine + L-methionine + A + S-adenosyl-L-homocysteine + 2 H(+). In terms of biological role, catalyzes the methylthiolation of an aspartic acid residue of ribosomal protein uS12. This Xanthobacter autotrophicus (strain ATCC BAA-1158 / Py2) protein is Ribosomal protein uS12 methylthiotransferase RimO.